We begin with the raw amino-acid sequence, 1376 residues long: DNA-directed RNA polymerase subunit beta (1376 aa).

The protein belongs to the RNA polymerase beta chain family. The RNAP catalytic core consists of 2 alpha, 1 beta, 1 beta' and 1 omega subunit. When a sigma factor is associated with the core the holoenzyme is formed, which can initiate transcription.

It carries out the reaction RNA(n) + a ribonucleoside 5'-triphosphate = RNA(n+1) + diphosphate. DNA-dependent RNA polymerase catalyzes the transcription of DNA into RNA using the four ribonucleoside triphosphates as substrates. The sequence is that of DNA-directed RNA polymerase subunit beta from Methylorubrum extorquens (strain PA1) (Methylobacterium extorquens).